A 385-amino-acid chain; its full sequence is Succinate--CoA ligase [ADP-forming] subunit beta (385 aa).

In terms of domain architecture, ATP-grasp spans 9–244 (KEILRKYGVP…QDEEDPLETR (236 aa)). Residues Lys-46, 53 to 55 (GRG), Glu-99, Cys-102, and Glu-107 each bind ATP. Mg(2+) contacts are provided by Asn-199 and Asp-213. Substrate is bound by residues Asn-264 and 321–323 (GIM).

The protein belongs to the succinate/malate CoA ligase beta subunit family. In terms of assembly, heterotetramer of two alpha and two beta subunits. Requires Mg(2+) as cofactor.

It carries out the reaction succinate + ATP + CoA = succinyl-CoA + ADP + phosphate. It catalyses the reaction GTP + succinate + CoA = succinyl-CoA + GDP + phosphate. It participates in carbohydrate metabolism; tricarboxylic acid cycle; succinate from succinyl-CoA (ligase route): step 1/1. Succinyl-CoA synthetase functions in the citric acid cycle (TCA), coupling the hydrolysis of succinyl-CoA to the synthesis of either ATP or GTP and thus represents the only step of substrate-level phosphorylation in the TCA. The beta subunit provides nucleotide specificity of the enzyme and binds the substrate succinate, while the binding sites for coenzyme A and phosphate are found in the alpha subunit. This is Succinate--CoA ligase [ADP-forming] subunit beta from Rickettsia bellii (strain OSU 85-389).